The primary structure comprises 435 residues: Manganese transport system membrane protein MntC (435 aa).

9 helical membrane-spanning segments follow: residues 17–37, 42–62, 68–88, 98–118, 143–163, 166–186, 189–209, 228–248, and 255–275; these read VLAGTLLLGTASGVLGSFVLL, LIGDAMAHSALPGVCLAFLFT, PFFLLGAALAGLLGTFCIQLI, SAIGIVLSVFFGVGIILLTYI, QDIILIAGISAVLLLLCIVFF, FTLITFDLAFAKGLGIPVRFL, LLACLIVCAVVIGLQTVGVIL, LTGMIIIAGITGGVSGVAGTL, and GMATGPLMILSATLLFLFSMI.

It belongs to the ABC-3 integral membrane protein family. The complex is probably composed of two ATP-binding proteins (MntB), two transmembrane proteins (MntC and MntD) and a solute-binding protein (MntA).

It is found in the cell membrane. In terms of biological role, probably part of the ABC transporter complex MntABCD involved in manganese import. Probably responsible for the translocation of the substrate across the membrane. The sequence is that of Manganese transport system membrane protein MntC from Bacillus subtilis (strain 168).